A 446-amino-acid polypeptide reads, in one-letter code: Methanogenesis regulatory protein FilR1 (446 aa).

Positions 297–416 (DVMIVEDDLG…QRLPEIAEEA (120 aa)) constitute a Response regulatory domain. At aspartate 350 the chain carries 4-aspartylphosphate.

Phosphorylated by FilI.

Functionally, member of the two-component regulatory system FilI/FilRs, which is involved in the regulation of methanogenesis. Regulates its own expression, expression of the filI-filR2 operon, and of genes involved in methanogenesis such as acs1, acs4 and mtrABC. Acts by binding to the promoters. The polypeptide is Methanogenesis regulatory protein FilR1 (Methanothrix harundinacea (strain 6Ac) (Methanosaeta harundinacea)).